The following is a 518-amino-acid chain: Protease Do-like 4, mitochondrial (518 aa).

A mitochondrion-targeting transit peptide spans 1-23 (MLFRFLQTLARFCRFLLISVLGF). Positions 98–262 (ESGGSGFVIS…IPTPVIKHFL (165 aa)) are serine protease. Catalysis depends on charge relay system residues His-116, Asp-147, and Ser-225. The region spanning 278-358 (DISYQLMENS…HFVSMKKLDE (81 aa)) is the PDZ domain.

It belongs to the peptidase S1C family.

The protein localises to the mitochondrion membrane. Putative serine protease. This Arabidopsis thaliana (Mouse-ear cress) protein is Protease Do-like 4, mitochondrial (DEGP4).